The primary structure comprises 955 residues: Aminopeptidase A (955 aa).

Over 1 to 17 (MDIEDKSSKMHCMKGKH) the chain is Cytoplasmic. The helical; Signal-anchor for type II membrane protein transmembrane segment at 18–38 (VAIICGVVIAVGLILGLGLGL) threads the bilayer. The Extracellular portion of the chain corresponds to 39–955 (GLKPEACNPP…LENSEQPNFV (917 aa)). Residues 49–69 (EDNGLLSTKPPTTSTPNVTNP) form a disordered region. Residues 55 to 69 (STKPPTTSTPNVTNP) show a composition bias toward low complexity. Residues asparagine 65, asparagine 118, and asparagine 192 are each glycosylated (N-linked (GlcNAc...) asparagine). Residue glutamate 218 coordinates substrate. N-linked (GlcNAc...) asparagine glycans are attached at residues asparagine 312, asparagine 319, and asparagine 335. A substrate-binding site is contributed by 352 to 356 (GAMEN). Histidine 388 provides a ligand contact to Zn(2+). Catalysis depends on glutamate 389, which acts as the Proton acceptor. 2 residues coordinate Zn(2+): histidine 392 and glutamate 411. N-linked (GlcNAc...) asparagine glycosylation is found at asparagine 458, asparagine 547, asparagine 584, asparagine 592, asparagine 647, asparagine 674, asparagine 681, asparagine 759, asparagine 766, asparagine 823, and asparagine 836. Arginine 882 is a binding site for substrate.

The protein belongs to the peptidase M1 family. As to quaternary structure, homodimer; disulfide-linked. Requires Zn(2+) as cofactor.

The protein localises to the cell membrane. It catalyses the reaction Release of N-terminal glutamate (and to a lesser extent aspartate) from a peptide.. The partially purified protein is inhibited by the aminopeptidase competitive inhibitors amastatin (Leu and acidic inhibitor), and bestatin (Leu inhibitor), by chelating agents EDTA, and 1,10-Phenanthroline, as well as by Zn(2+) ions. Substrate specificity is modulated by Ca(2+), Ba(2+), and Mn(2+) ions which enhances the enzymatic activity for cleavage of acidic residues. In terms of biological role, venom protein that cleaves N-terminal acidic residues from peptides with high potency in presence of calcium. It may have several roles in venom including alteration of blood pressure by cleaving circulating angiotensin-2, general degradation of host tissue, increase of permeability to other venom components, and/or processing of other toxins in the venom. This Gloydius brevicauda (Korean slamosa snake) protein is Aminopeptidase A.